The chain runs to 88 residues: MAHKKGQGSTQNNRDSAGRRLGVKKFGSEFVRAGNIIVRQRGTKIHPGNNVGMGKDHTLYALIDGVVKFEHKDRSRKKVSVISGNFGE.

The tract at residues 1–21 is disordered; sequence MAHKKGQGSTQNNRDSAGRRL.

This sequence belongs to the bacterial ribosomal protein bL27 family.

The chain is Large ribosomal subunit protein bL27 from Helicobacter pylori (strain J99 / ATCC 700824) (Campylobacter pylori J99).